Reading from the N-terminus, the 260-residue chain is MATIKEIKEQLAAISDLLDPHWTEFEADARSGVQAAVRQRKKIIQADLDEEVRLENMLRYEKDLYLQGYQAIAGIDEVGRGPLAGPVVAACVILPKNCKIRHLNDSKKIPKKKHEEIYKQVVKVALAIGIGRISSEMIDQVNIYEATKMAMLQAIDDLQGLVSRPDYLLIDAMNLGISIPQSSIIKGDAHSLSIAAASIVAKVTRDRMMIGYDEIYPGYGFAQNVGYGTKQHLEGLETLGVTPIHRRTFEPIKSMLKEKN.

Positions 70-260 (QAIAGIDEVG…PIKSMLKEKN (191 aa)) constitute an RNase H type-2 domain. A divalent metal cation is bound by residues Asp76, Glu77, and Asp171.

The protein belongs to the RNase HII family. Requires Mn(2+) as cofactor. Mg(2+) is required as a cofactor.

It is found in the cytoplasm. It catalyses the reaction Endonucleolytic cleavage to 5'-phosphomonoester.. Its function is as follows. Endonuclease that specifically degrades the RNA of RNA-DNA hybrids. The sequence is that of Ribonuclease HII from Streptococcus mutans serotype c (strain ATCC 700610 / UA159).